The following is a 268-amino-acid chain: 4-hydroxy-tetrahydrodipicolinate reductase (268 aa).

NAD(+)-binding positions include 10 to 15 and Asp36; that span reads GASGRM. Arg37 contributes to the NADP(+) binding site. NAD(+) contacts are provided by residues 99–101 and 123–126; these read GTT and SANM. His156 (proton donor/acceptor) is an active-site residue. His157 serves as a coordination point for (S)-2,3,4,5-tetrahydrodipicolinate. Lys160 serves as the catalytic Proton donor. Position 166–167 (166–167) interacts with (S)-2,3,4,5-tetrahydrodipicolinate; sequence GT.

The protein belongs to the DapB family.

The protein localises to the cytoplasm. The enzyme catalyses (S)-2,3,4,5-tetrahydrodipicolinate + NAD(+) + H2O = (2S,4S)-4-hydroxy-2,3,4,5-tetrahydrodipicolinate + NADH + H(+). It catalyses the reaction (S)-2,3,4,5-tetrahydrodipicolinate + NADP(+) + H2O = (2S,4S)-4-hydroxy-2,3,4,5-tetrahydrodipicolinate + NADPH + H(+). Its pathway is amino-acid biosynthesis; L-lysine biosynthesis via DAP pathway; (S)-tetrahydrodipicolinate from L-aspartate: step 4/4. In terms of biological role, catalyzes the conversion of 4-hydroxy-tetrahydrodipicolinate (HTPA) to tetrahydrodipicolinate. The sequence is that of 4-hydroxy-tetrahydrodipicolinate reductase from Burkholderia thailandensis (strain ATCC 700388 / DSM 13276 / CCUG 48851 / CIP 106301 / E264).